The chain runs to 80 residues: Raniseptin-2 (80 aa).

The first 22 residues, Met-1–Cys-22, serve as a signal peptide directing secretion. Residues Glu-23–Glu-49 constitute a propeptide that is removed on maturation. The tract at residues Arg-27–Glu-46 is disordered. Acidic residues predominate over residues Glu-30–Glu-44.

The protein belongs to the frog skin active peptide (FSAP) family. Dermaseptin subfamily. In terms of tissue distribution, expressed by the skin glands.

The protein localises to the secreted. Its function is as follows. Has antibacterial activity. This is Raniseptin-2 from Boana raniceps (Chaco tree frog).